Reading from the N-terminus, the 263-residue chain is Microtubule-associated protein RP/EB family member 1 (263 aa).

The region spanning 14 to 116 is the Calponin-homology (CH) domain; sequence NLSRHDMLAW…FVQWFKKFFD (103 aa). Residues 180 to 250 enclose the EB1 C-terminal domain; sequence KKAAGDDESA…LYATDEGFVI (71 aa).

This sequence belongs to the MAPRE family.

Its subcellular location is the cytoplasm. The protein resides in the cytoskeleton. It localises to the microtubule organizing center. The protein localises to the centrosome. It is found in the golgi apparatus. Its subcellular location is the spindle. The protein resides in the spindle pole. In terms of biological role, plus-end tracking protein (+TIP) that binds to the plus-end of microtubules and regulates the dynamics of the microtubule cytoskeleton. Promotes cytoplasmic microtubule nucleation and elongation. Involved in mitotic spindle positioning by stabilizing microtubules and promoting dynamic connection between astral microtubules and the cortex during mitotic chromosome segregation. The chain is Microtubule-associated protein RP/EB family member 1 (MAPRE1) from Coturnix coturnix (Common quail).